The primary structure comprises 38 residues: Photosystem II reaction center protein L (38 aa).

A helical membrane pass occupies residues 17–37 (SLYWGLLCIFVLAILFSSYFF).

This sequence belongs to the PsbL family. In terms of assembly, PSII is composed of 1 copy each of membrane proteins PsbA, PsbB, PsbC, PsbD, PsbE, PsbF, PsbH, PsbI, PsbJ, PsbK, PsbL, PsbM, PsbT, PsbX, PsbY, PsbZ, Psb30/Ycf12, at least 3 peripheral proteins of the oxygen-evolving complex and a large number of cofactors. It forms dimeric complexes.

Its subcellular location is the plastid. The protein resides in the chloroplast thylakoid membrane. Functionally, one of the components of the core complex of photosystem II (PSII). PSII is a light-driven water:plastoquinone oxidoreductase that uses light energy to abstract electrons from H(2)O, generating O(2) and a proton gradient subsequently used for ATP formation. It consists of a core antenna complex that captures photons, and an electron transfer chain that converts photonic excitation into a charge separation. This subunit is found at the monomer-monomer interface and is required for correct PSII assembly and/or dimerization. The chain is Photosystem II reaction center protein L from Cyanidioschyzon merolae (strain NIES-3377 / 10D) (Unicellular red alga).